A 1374-amino-acid polypeptide reads, in one-letter code: DNA-directed RNA polymerase subunit beta (1374 aa).

The protein belongs to the RNA polymerase beta chain family. In terms of assembly, the RNAP catalytic core consists of 2 alpha, 1 beta, 1 beta' and 1 omega subunit. When a sigma factor is associated with the core the holoenzyme is formed, which can initiate transcription.

It carries out the reaction RNA(n) + a ribonucleoside 5'-triphosphate = RNA(n+1) + diphosphate. In terms of biological role, DNA-dependent RNA polymerase catalyzes the transcription of DNA into RNA using the four ribonucleoside triphosphates as substrates. In Acidovorax sp. (strain JS42), this protein is DNA-directed RNA polymerase subunit beta.